The chain runs to 398 residues: MSERVILAYSGGLDTSVAISWIGKETGREVVAVAIDLGQGGEDMEVVRQRALDCGAVEAVVVDARDEFAEGYCLPTILNNALYMDRYPLVSAISRPLIVKHLVEAAREHGGGIVAHGCTGKGNDQVRFEVGFASLAPDLEVLAPVRDYAWTREKAIAFAEENAIPINVTKRSPFSIDQNVWGRAVETGFLEHLWNAPTKDVYSYTEDPTVNWNTPDEVIVGFERGMPVSIDGNAVTMLQAIEELNRRAGAQGVGRLDVVEDRLVGIKSREIYEAPGAMVLITAHAELEHVTLERELARFKRHTDQRWAELVYDGLWYSPLKTALESFVAKTQEHVSGEIRLVLHGGHIAVNGRRSAESLYDFNLATYDEGDTFDQSAAKGFVYVHGLSSKLSARRDLQ.

A8 to S16 contributes to the ATP binding site. Residue Y87 participates in L-citrulline binding. G117 is an ATP binding site. L-aspartate contacts are provided by T119, N123, and D124. Residue N123 participates in L-citrulline binding. The L-citrulline site is built by R127, S175, E260, and Y272.

This sequence belongs to the argininosuccinate synthase family. Type 1 subfamily. As to quaternary structure, homotetramer.

The protein resides in the cytoplasm. The catalysed reaction is L-citrulline + L-aspartate + ATP = 2-(N(omega)-L-arginino)succinate + AMP + diphosphate + H(+). The protein operates within amino-acid biosynthesis; L-arginine biosynthesis; L-arginine from L-ornithine and carbamoyl phosphate: step 2/3. The chain is Argininosuccinate synthase from Mycobacterium marinum (strain ATCC BAA-535 / M).